The sequence spans 635 residues: Nuclear distribution protein nudE homolog 1 (635 aa).

The stretch at 14–192 forms a coiled coil; it reads EKEIKHWKSK…TILRDLVTRS (179 aa). 5 disordered regions span residues 35–63, 200–267, 279–328, 389–504, and 516–635; these read ESSL…NKTI, TMAS…LSRD, VLDD…SARA, SRVV…DHDP, and AAQA…TETF. The segment covering 43–56 has biased composition (basic and acidic residues); the sequence is ESSKELEQEMEKEL. Polar residues-rich tracts occupy residues 201–224 and 237–246; these read MASS…SPIK and SRQALSSPVT. Over residues 280–299 the composition is skewed to low complexity; that stretch reads LDDSPTATTTSAAPTRSSTL. 2 stretches are compositionally biased toward polar residues: residues 314 to 326 and 411 to 428; these read ASTS…SPSA and GSPS…TSTP. Positions 516-541 are enriched in low complexity; it reads AAQASVAKRRTSMSGSGMSHSASHGS. Polar residues-rich tracts occupy residues 547 to 571 and 580 to 619; these read SGST…SSMT and SKRT…PAQT. The segment covering 620–635 has biased composition (low complexity); the sequence is LSRSRSSSLGSETETF.

Belongs to the nudE family. Self-associates. Interacts with PAC1.

The protein localises to the cytoplasm. It localises to the cytoskeleton. Required for nuclear migration. In Mycosarcoma maydis (Corn smut fungus), this protein is Nuclear distribution protein nudE homolog 1 (NDE1).